The chain runs to 423 residues: UDP-N-acetylglucosamine 1-carboxyvinyltransferase (423 aa).

Residue 22–23 (KN) participates in phosphoenolpyruvate binding. UDP-N-acetyl-alpha-D-glucosamine is bound at residue R98. Catalysis depends on C122, which acts as the Proton donor. C122 carries the 2-(S-cysteinyl)pyruvic acid O-phosphothioketal modification. Residues 127–131 (RPVDQ), D311, and I333 contribute to the UDP-N-acetyl-alpha-D-glucosamine site.

It belongs to the EPSP synthase family. MurA subfamily.

The protein localises to the cytoplasm. The enzyme catalyses phosphoenolpyruvate + UDP-N-acetyl-alpha-D-glucosamine = UDP-N-acetyl-3-O-(1-carboxyvinyl)-alpha-D-glucosamine + phosphate. It functions in the pathway cell wall biogenesis; peptidoglycan biosynthesis. In terms of biological role, cell wall formation. Adds enolpyruvyl to UDP-N-acetylglucosamine. In Stenotrophomonas maltophilia (strain R551-3), this protein is UDP-N-acetylglucosamine 1-carboxyvinyltransferase.